Consider the following 342-residue polypeptide: UDP-N-acetylglucosamine--N-acetylmuramyl-(pentapeptide) pyrophosphoryl-undecaprenol N-acetylglucosamine transferase (342 aa).

Residues 10–12 (TGG), N124, S177, and Q275 each bind UDP-N-acetyl-alpha-D-glucosamine.

This sequence belongs to the glycosyltransferase 28 family. MurG subfamily.

The protein resides in the cell inner membrane. It carries out the reaction di-trans,octa-cis-undecaprenyl diphospho-N-acetyl-alpha-D-muramoyl-L-alanyl-D-glutamyl-meso-2,6-diaminopimeloyl-D-alanyl-D-alanine + UDP-N-acetyl-alpha-D-glucosamine = di-trans,octa-cis-undecaprenyl diphospho-[N-acetyl-alpha-D-glucosaminyl-(1-&gt;4)]-N-acetyl-alpha-D-muramoyl-L-alanyl-D-glutamyl-meso-2,6-diaminopimeloyl-D-alanyl-D-alanine + UDP + H(+). It functions in the pathway cell wall biogenesis; peptidoglycan biosynthesis. Cell wall formation. Catalyzes the transfer of a GlcNAc subunit on undecaprenyl-pyrophosphoryl-MurNAc-pentapeptide (lipid intermediate I) to form undecaprenyl-pyrophosphoryl-MurNAc-(pentapeptide)GlcNAc (lipid intermediate II). The polypeptide is UDP-N-acetylglucosamine--N-acetylmuramyl-(pentapeptide) pyrophosphoryl-undecaprenol N-acetylglucosamine transferase (Campylobacter jejuni (strain RM1221)).